Here is a 312-residue protein sequence, read N- to C-terminus: Gamma-soluble NSF attachment protein (312 aa).

The tract at residues 281-312 (KKKSPATPQAKPDGAAGMAAEEEEDEYSGGLC) is disordered. Serine 284 carries the phosphoserine modification. Phosphothreonine is present on threonine 287. Residues 300–312 (AEEEEDEYSGGLC) are compositionally biased toward acidic residues. At serine 308 the chain carries Phosphoserine.

This sequence belongs to the SNAP family. As to quaternary structure, interacts with RAB11FIP5. Interacts with VTI1A. As to expression, abundantly expressed in the heart, liver and kidneys with lower expression in the brain, spleen, lung, muscle and testes.

The protein localises to the membrane. Its subcellular location is the golgi apparatus. In terms of biological role, required for vesicular transport between the endoplasmic reticulum and the Golgi apparatus. The protein is Gamma-soluble NSF attachment protein of Mus musculus (Mouse).